The chain runs to 248 residues: NH(3)-dependent NAD(+) synthetase (248 aa).

31-38 (GLSGGVDS) serves as a coordination point for ATP. Asp-37 lines the Mg(2+) pocket. Residue Arg-114 coordinates deamido-NAD(+). Thr-134 provides a ligand contact to ATP. Glu-139 lines the Mg(2+) pocket. Deamido-NAD(+) contacts are provided by Lys-147 and Asp-154. ATP contacts are provided by Lys-163 and Thr-185. Residue 232 to 233 (HK) participates in deamido-NAD(+) binding.

Belongs to the NAD synthetase family. In terms of assembly, homodimer.

It catalyses the reaction deamido-NAD(+) + NH4(+) + ATP = AMP + diphosphate + NAD(+) + H(+). The protein operates within cofactor biosynthesis; NAD(+) biosynthesis; NAD(+) from deamido-NAD(+) (ammonia route): step 1/1. In terms of biological role, catalyzes the ATP-dependent amidation of deamido-NAD to form NAD. Uses ammonia as a nitrogen source. In Mycoplasma pneumoniae (strain ATCC 29342 / M129 / Subtype 1) (Mycoplasmoides pneumoniae), this protein is NH(3)-dependent NAD(+) synthetase.